The chain runs to 457 residues: 5' exonuclease Apollo (457 aa).

A TBM motif is present at residues 425-437 (ELPKQYLLTPLNA).

It belongs to the DNA repair metallo-beta-lactamase (DRMBL) family. As to quaternary structure, interacts with TERF2; the interaction is direct.

It localises to the chromosome. The protein resides in the telomere. The protein localises to the nucleus. The catalysed reaction is a beta-lactam + H2O = a substituted beta-amino acid. Its function is as follows. 5'-3' exonuclease that plays a central role in telomere maintenance and protection during S-phase. Participates in the protection of telomeres against non-homologous end-joining (NHEJ)-mediated repair, thereby ensuring that telomeres do not fuse. Plays a key role in telomeric loop (T loop) formation by being recruited by TERF2 at the leading end telomeres and by processing leading-end telomeres immediately after their replication via its exonuclease activity: generates 3' single-stranded overhang at the leading end telomeres avoiding blunt leading-end telomeres that are vulnerable to end-joining reactions and expose the telomere end in a manner that activates the DNA repair pathways. May be required for DNA interstrand cross-link repair. Possesses beta-lactamase activity, catalyzing the hydrolysis of penicillin G and nitrocefin. Exhibits no activity towards other beta-lactam antibiotic classes including cephalosporins (cefotaxime) and carbapenems (imipenem). The sequence is that of 5' exonuclease Apollo (DCLRE1B) from Gallus gallus (Chicken).